We begin with the raw amino-acid sequence, 594 residues long: Potassium-transporting ATPase potassium-binding subunit (594 aa).

10 consecutive transmembrane segments (helical) span residues 3 to 23 (ADFL…APLL), 67 to 87 (AVAM…LQRL), 136 to 156 (ALTV…IALV), 179 to 199 (LYVL…QGVV), 287 to 307 (LEML…GEMV), 314 to 334 (VAIL…AAYF), 415 to 435 (GLYG…LMIG), 453 to 473 (VALV…VAVL), 519 to 539 (VLLG…ILAL), and 562 to 582 (LFVA…YVPA).

It belongs to the KdpA family. The system is composed of three essential subunits: KdpA, KdpB and KdpC.

It is found in the cell inner membrane. Part of the high-affinity ATP-driven potassium transport (or Kdp) system, which catalyzes the hydrolysis of ATP coupled with the electrogenic transport of potassium into the cytoplasm. This subunit binds the periplasmic potassium ions and delivers the ions to the membrane domain of KdpB through an intramembrane tunnel. The protein is Potassium-transporting ATPase potassium-binding subunit of Bordetella parapertussis (strain 12822 / ATCC BAA-587 / NCTC 13253).